Here is a 100-residue protein sequence, read N- to C-terminus: Aspartyl/glutamyl-tRNA(Asn/Gln) amidotransferase subunit C (100 aa).

It belongs to the GatC family. As to quaternary structure, heterotrimer of A, B and C subunits.

It catalyses the reaction L-glutamyl-tRNA(Gln) + L-glutamine + ATP + H2O = L-glutaminyl-tRNA(Gln) + L-glutamate + ADP + phosphate + H(+). The catalysed reaction is L-aspartyl-tRNA(Asn) + L-glutamine + ATP + H2O = L-asparaginyl-tRNA(Asn) + L-glutamate + ADP + phosphate + 2 H(+). In terms of biological role, allows the formation of correctly charged Asn-tRNA(Asn) or Gln-tRNA(Gln) through the transamidation of misacylated Asp-tRNA(Asn) or Glu-tRNA(Gln) in organisms which lack either or both of asparaginyl-tRNA or glutaminyl-tRNA synthetases. The reaction takes place in the presence of glutamine and ATP through an activated phospho-Asp-tRNA(Asn) or phospho-Glu-tRNA(Gln). This chain is Aspartyl/glutamyl-tRNA(Asn/Gln) amidotransferase subunit C, found in Dictyoglomus thermophilum (strain ATCC 35947 / DSM 3960 / H-6-12).